The primary structure comprises 400 residues: Formate-dependent phosphoribosylglycinamide formyltransferase (400 aa).

N(1)-(5-phospho-beta-D-ribosyl)glycinamide is bound by residues 22 to 23 (EL) and glutamate 82. Residues arginine 114, lysine 155, 160-165 (SSGKGQ), 195-198 (EGFV), and glutamate 203 each bind ATP. One can recognise an ATP-grasp domain in the interval 119-308 (RLAAEELGLS…EFALHARALL (190 aa)). Residues glutamate 267 and glutamate 279 each contribute to the Mg(2+) site. N(1)-(5-phospho-beta-D-ribosyl)glycinamide-binding positions include aspartate 286, lysine 356, and 363 to 364 (RR).

Belongs to the PurK/PurT family. Homodimer.

The catalysed reaction is N(1)-(5-phospho-beta-D-ribosyl)glycinamide + formate + ATP = N(2)-formyl-N(1)-(5-phospho-beta-D-ribosyl)glycinamide + ADP + phosphate + H(+). It participates in purine metabolism; IMP biosynthesis via de novo pathway; N(2)-formyl-N(1)-(5-phospho-D-ribosyl)glycinamide from N(1)-(5-phospho-D-ribosyl)glycinamide (formate route): step 1/1. In terms of biological role, involved in the de novo purine biosynthesis. Catalyzes the transfer of formate to 5-phospho-ribosyl-glycinamide (GAR), producing 5-phospho-ribosyl-N-formylglycinamide (FGAR). Formate is provided by PurU via hydrolysis of 10-formyl-tetrahydrofolate. The chain is Formate-dependent phosphoribosylglycinamide formyltransferase from Hahella chejuensis (strain KCTC 2396).